Here is a 164-residue protein sequence, read N- to C-terminus: ATP synthase B' chain, cyanelle (164 aa).

A helical membrane pass occupies residues Ala-26 to Phe-46.

Belongs to the ATPase B chain family. F-type ATPases have 2 components, F(1) - the catalytic core - and F(0) - the membrane proton channel. F(1) has five subunits: alpha(3), beta(3), gamma(1), delta(1), epsilon(1). F(0) has four main subunits: a(1), b(1), b'(1) and c(10-14). The alpha and beta chains form an alternating ring which encloses part of the gamma chain. F(1) is attached to F(0) by a central stalk formed by the gamma and epsilon chains, while a peripheral stalk is formed by the delta, b and b' chains.

Its subcellular location is the plastid. It is found in the cyanelle thylakoid membrane. Its function is as follows. F(1)F(0) ATP synthase produces ATP from ADP in the presence of a proton or sodium gradient. F-type ATPases consist of two structural domains, F(1) containing the extramembraneous catalytic core and F(0) containing the membrane proton channel, linked together by a central stalk and a peripheral stalk. During catalysis, ATP synthesis in the catalytic domain of F(1) is coupled via a rotary mechanism of the central stalk subunits to proton translocation. In terms of biological role, component of the F(0) channel, it forms part of the peripheral stalk, linking F(1) to F(0). The b'-subunit is a diverged and duplicated form of b found in plants and photosynthetic bacteria. The polypeptide is ATP synthase B' chain, cyanelle (Cyanophora paradoxa).